Consider the following 716-residue polypeptide: Fatty acid oxidation complex subunit alpha (716 aa).

The interval 1–188 is enoyl-CoA hydratase/isomerase; the sequence is MIYQSPTIQV…KVGAIDAVVA (188 aa). Asp-295 is a substrate binding site. The tract at residues 310–716 is 3-hydroxyacyl-CoA dehydrogenase; that stretch reads KDIKHAAVLG…SNNGSYYPKA (407 aa). Residues Met-323, Asp-342, 399–401, Lys-406, and Ser-428 each bind NAD(+); that span reads VVE. The active-site For 3-hydroxyacyl-CoA dehydrogenase activity is the His-449. NAD(+) is bound at residue Asn-452. Substrate is bound by residues Asn-499 and Tyr-659.

This sequence in the N-terminal section; belongs to the enoyl-CoA hydratase/isomerase family. It in the C-terminal section; belongs to the 3-hydroxyacyl-CoA dehydrogenase family. In terms of assembly, heterotetramer of two alpha chains (FadB) and two beta chains (FadA).

It catalyses the reaction a (3S)-3-hydroxyacyl-CoA + NAD(+) = a 3-oxoacyl-CoA + NADH + H(+). It carries out the reaction a (3S)-3-hydroxyacyl-CoA = a (2E)-enoyl-CoA + H2O. The catalysed reaction is a 4-saturated-(3S)-3-hydroxyacyl-CoA = a (3E)-enoyl-CoA + H2O. The enzyme catalyses (3S)-3-hydroxybutanoyl-CoA = (3R)-3-hydroxybutanoyl-CoA. It catalyses the reaction a (3Z)-enoyl-CoA = a 4-saturated (2E)-enoyl-CoA. It carries out the reaction a (3E)-enoyl-CoA = a 4-saturated (2E)-enoyl-CoA. Its pathway is lipid metabolism; fatty acid beta-oxidation. Functionally, involved in the aerobic and anaerobic degradation of long-chain fatty acids via beta-oxidation cycle. Catalyzes the formation of 3-oxoacyl-CoA from enoyl-CoA via L-3-hydroxyacyl-CoA. It can also use D-3-hydroxyacyl-CoA and cis-3-enoyl-CoA as substrate. This Shewanella amazonensis (strain ATCC BAA-1098 / SB2B) protein is Fatty acid oxidation complex subunit alpha.